Reading from the N-terminus, the 304-residue chain is Non-specific ribonucleoside hydrolase RihC (304 aa).

The active site involves His233.

This sequence belongs to the IUNH family. RihC subfamily.

In terms of biological role, hydrolyzes both purine and pyrimidine ribonucleosides with a broad-substrate specificity. This Escherichia coli O7:K1 (strain IAI39 / ExPEC) protein is Non-specific ribonucleoside hydrolase RihC.